Here is a 1278-residue protein sequence, read N- to C-terminus: Alpha-glucan water dikinase 2 (1278 aa).

The signal sequence occupies residues 1-23 (MATSKSQQFQLIEGMELQITVTG). His-886 functions as the Tele-phosphohistidine intermediate in the catalytic mechanism.

The protein belongs to the PEP-utilizing enzyme family. Homodimer. Mg(2+) is required as a cofactor.

It catalyses the reaction [(1-&gt;4)-alpha-D-glucosyl](n) + n ATP + n H2O = [(1-&gt;4)-6-phospho-alpha-D-glucosyl](n) + n AMP + n phosphate + 2n H(+). In terms of biological role, mediates the incorporation of phosphate into alpha-glucan, mostly at the C-6 position of glucose units. The chain is Alpha-glucan water dikinase 2 (GWD2) from Arabidopsis thaliana (Mouse-ear cress).